Consider the following 222-residue polypeptide: MKEETTTTTTTTTTKNTTKIIRNEDDDYELVKVIILGDNKTGKSSILRRYHYNEFELGVSSIGVDFIKKDYGMVNGKYYKIQIWDVNSCDRFRLLTHSYYKGAHGFMLLYDCTNQESFNNLQFWINEIINKSPNSNNSTIVIIGNKCDLVNGIKIDPIKSKQFCDSKSITSFQNVSAKDSININEPFEILFRQIIKKGHSQTVSPKHDTYENNNINKSCNIL.

37-44 (GDNKTGKS) lines the GTP pocket. An Effector region motif is present at residues 59–66 (VSSIGVDF). Residues 85 to 89 (DVNSC) and 145 to 148 (NKCD) contribute to the GTP site. Residue C219 is modified to Cysteine methyl ester. The S-geranylgeranyl cysteine moiety is linked to residue C219. Positions 220–222 (NIL) are cleaved as a propeptide — removed in mature form.

Belongs to the small GTPase superfamily. Rab family.

The protein resides in the cell membrane. The protein is Ras-related protein RabT1 (rabT1) of Dictyostelium discoideum (Social amoeba).